The primary structure comprises 159 residues: MTDTQAGTTTQTQVVIYTDGACKGNPGPGGWGVLLAMGDTEKELFGGEPVTTNNRMEMTAVIEALAALKRPCRVTLYLDSEYVRKGITEWIHGWKARGWRTAAKAPVKNVDLWQRLDALVTSSGHKIDWRWVKGHNGDPGNERADALANQGVERALGRR.

One can recognise an RNase H type-1 domain in the interval 10–153 (TQTQVVIYTD…ADALANQGVE (144 aa)). The Mg(2+) site is built by Asp-19, Glu-57, Asp-79, and Asp-145.

It belongs to the RNase H family. Monomer. Mg(2+) is required as a cofactor.

The protein resides in the cytoplasm. The enzyme catalyses Endonucleolytic cleavage to 5'-phosphomonoester.. In terms of biological role, endonuclease that specifically degrades the RNA of RNA-DNA hybrids. This chain is Ribonuclease H, found in Polaromonas sp. (strain JS666 / ATCC BAA-500).